We begin with the raw amino-acid sequence, 188 residues long: Large ribosomal subunit protein uL22 (188 aa).

The tract at residues 155-188 (STPEGAKKGKKKKGTKDAVEKSSKRVKTAATAAH) is disordered.

This sequence belongs to the universal ribosomal protein uL22 family.

The protein is Large ribosomal subunit protein uL22 (RpL17) of Agriotes lineatus (Lined click beetle).